We begin with the raw amino-acid sequence, 190 residues long: Small ribosomal subunit protein eS7 (190 aa).

The protein belongs to the eukaryotic ribosomal protein eS7 family. As to quaternary structure, component of the small ribosomal subunit. Part of the small subunit (SSU) processome, composed of more than 70 proteins and the RNA chaperone small nucleolar RNA (snoRNA) U3.

The protein resides in the cytoplasm. It localises to the cytoskeleton. It is found in the microtubule organizing center. Its subcellular location is the centrosome. The protein localises to the nucleus. The protein resides in the nucleolus. Functionally, component of the small ribosomal subunit. The ribosome is a large ribonucleoprotein complex responsible for the synthesis of proteins in the cell. Required for rRNA maturation. Part of the small subunit (SSU) processome, first precursor of the small eukaryotic ribosomal subunit. During the assembly of the SSU processome in the nucleolus, many ribosome biogenesis factors, an RNA chaperone and ribosomal proteins associate with the nascent pre-rRNA and work in concert to generate RNA folding, modifications, rearrangements and cleavage as well as targeted degradation of pre-ribosomal RNA by the RNA exosome. This Spodoptera frugiperda (Fall armyworm) protein is Small ribosomal subunit protein eS7 (RpS7).